The primary structure comprises 3131 residues: Intermembrane lipid transfer protein vps1302 (3131 aa).

One can recognise a Chorein N-terminal domain in the interval 2–115; sequence LEGLLANFLN…VLESKRRQMQ (114 aa). Positions 774–801 are enriched in basic and acidic residues; the sequence is DGKASDDDDNGDWRPESSESLDSHESEY. A disordered region spans residues 774–807; the sequence is DGKASDDDDNGDWRPESSESLDSHESEYKLNNTP. The SHR-BD domain occupies 2085 to 2363; that stretch reads KVMIYPPYVI…NYSWDFPILK (279 aa).

It belongs to the VPS13 family.

The protein localises to the golgi apparatus. It localises to the trans-Golgi network. In terms of biological role, mediates the transfer of lipids between membranes at organelle contact sites. May play a role in mitochondrial lipid homeostasis, Golgi vesicle transport, reticulophagy, actin cytoskeleton organization and formation of the forespore membrane. This chain is Intermembrane lipid transfer protein vps1302, found in Schizosaccharomyces pombe (strain 972 / ATCC 24843) (Fission yeast).